The primary structure comprises 803 residues: Leucine--tRNA ligase (803 aa).

Positions 40–51 (PYPSGAGLHVGH) match the 'HIGH' region motif. The short motif at 575–579 (KMSKS) is the 'KMSKS' region element. Residue K578 coordinates ATP.

The protein belongs to the class-I aminoacyl-tRNA synthetase family.

The protein resides in the cytoplasm. The enzyme catalyses tRNA(Leu) + L-leucine + ATP = L-leucyl-tRNA(Leu) + AMP + diphosphate. The polypeptide is Leucine--tRNA ligase (Listeria monocytogenes serotype 4b (strain F2365)).